Consider the following 189-residue polypeptide: dCTP deaminase (189 aa).

Residues 112-117, 136-138, Gln157, Tyr171, and Gln181 each bind dCTP; these read KSTYAR and TLE. Catalysis depends on Glu138, which acts as the Proton donor/acceptor.

It belongs to the dCTP deaminase family. In terms of assembly, homotrimer.

The enzyme catalyses dCTP + H2O + H(+) = dUTP + NH4(+). It participates in pyrimidine metabolism; dUMP biosynthesis; dUMP from dCTP (dUTP route): step 1/2. Its function is as follows. Catalyzes the deamination of dCTP to dUTP. This chain is dCTP deaminase, found in Teredinibacter turnerae (strain ATCC 39867 / T7901).